The primary structure comprises 270 residues: Thiazole synthase (270 aa).

Catalysis depends on Lys-112, which acts as the Schiff-base intermediate with DXP. 1-deoxy-D-xylulose 5-phosphate-binding positions include Gly-173, 199 to 200, and 221 to 222; these read AG and NS.

Belongs to the ThiG family. As to quaternary structure, homotetramer. Forms heterodimers with either ThiH or ThiS.

The protein resides in the cytoplasm. The enzyme catalyses [ThiS sulfur-carrier protein]-C-terminal-Gly-aminoethanethioate + 2-iminoacetate + 1-deoxy-D-xylulose 5-phosphate = [ThiS sulfur-carrier protein]-C-terminal Gly-Gly + 2-[(2R,5Z)-2-carboxy-4-methylthiazol-5(2H)-ylidene]ethyl phosphate + 2 H2O + H(+). Its pathway is cofactor biosynthesis; thiamine diphosphate biosynthesis. Catalyzes the rearrangement of 1-deoxy-D-xylulose 5-phosphate (DXP) to produce the thiazole phosphate moiety of thiamine. Sulfur is provided by the thiocarboxylate moiety of the carrier protein ThiS. In vitro, sulfur can be provided by H(2)S. The chain is Thiazole synthase from Pseudomonas putida (strain ATCC 700007 / DSM 6899 / JCM 31910 / BCRC 17059 / LMG 24140 / F1).